The sequence spans 208 residues: Orotidine 5'-phosphate decarboxylase (208 aa).

Substrate-binding positions include D7, K29, 57-66 (DLKLADIPNT), S109, 162-172 (PGIGAQGGKAK), G185, and R186. The active-site Proton donor is the K59.

It belongs to the OMP decarboxylase family. Type 1 subfamily. In terms of assembly, homodimer.

The catalysed reaction is orotidine 5'-phosphate + H(+) = UMP + CO2. The protein operates within pyrimidine metabolism; UMP biosynthesis via de novo pathway; UMP from orotate: step 2/2. Catalyzes the decarboxylation of orotidine 5'-monophosphate (OMP) to uridine 5'-monophosphate (UMP). The chain is Orotidine 5'-phosphate decarboxylase from Pyrococcus abyssi (strain GE5 / Orsay).